A 1393-amino-acid chain; its full sequence is DNA-directed RNA polymerase subunit beta' (1393 aa).

The Zn(2+) site is built by cysteine 72, cysteine 74, cysteine 87, and cysteine 90. Positions 463, 465, and 467 each coordinate Mg(2+). Zn(2+) contacts are provided by cysteine 812, cysteine 887, cysteine 894, and cysteine 897.

The protein belongs to the RNA polymerase beta' chain family. As to quaternary structure, the RNAP catalytic core consists of 2 alpha, 1 beta, 1 beta' and 1 omega subunit. When a sigma factor is associated with the core the holoenzyme is formed, which can initiate transcription. Mg(2+) serves as cofactor. Zn(2+) is required as a cofactor.

The enzyme catalyses RNA(n) + a ribonucleoside 5'-triphosphate = RNA(n+1) + diphosphate. DNA-dependent RNA polymerase catalyzes the transcription of DNA into RNA using the four ribonucleoside triphosphates as substrates. The sequence is that of DNA-directed RNA polymerase subunit beta' from Chlamydia abortus (strain DSM 27085 / S26/3) (Chlamydophila abortus).